Here is a 505-residue protein sequence, read N- to C-terminus: Cytochrome P450 4Z1 (505 aa).

Residues Met1–Leu9 lie on the Cytoplasmic side of the membrane. The chain crosses the membrane as a helical; Signal-anchor for type II membrane protein span at residues Met10–Ile30. Over Arg31–Cys505 the chain is Lumenal. Residue Cys452 participates in heme binding.

Belongs to the cytochrome P450 family. The cofactor is heme. As to expression, preferentially detected in breast carcinoma tissue and mammary gland, whereas only marginal expression is found in all other tested tissues.

It is found in the endoplasmic reticulum membrane. Its subcellular location is the microsome membrane. The catalysed reaction is an organic molecule + reduced [NADPH--hemoprotein reductase] + O2 = an alcohol + oxidized [NADPH--hemoprotein reductase] + H2O + H(+). The enzyme catalyses dodecanoate + reduced [NADPH--hemoprotein reductase] + O2 = 7-hydroxydodecanoate + oxidized [NADPH--hemoprotein reductase] + H2O + H(+). It carries out the reaction dodecanoate + reduced [NADPH--hemoprotein reductase] + O2 = 8-hydroxydodecanoate + oxidized [NADPH--hemoprotein reductase] + H2O + H(+). It catalyses the reaction dodecanoate + reduced [NADPH--hemoprotein reductase] + O2 = 9-hydroxydodecanoate + oxidized [NADPH--hemoprotein reductase] + H2O + H(+). The catalysed reaction is dodecanoate + reduced [NADPH--hemoprotein reductase] + O2 = 10-hydroxydodecanoate + oxidized [NADPH--hemoprotein reductase] + H2O + H(+). The enzyme catalyses dodecanoate + reduced [NADPH--hemoprotein reductase] + O2 = 11-hydroxydodecanoate + oxidized [NADPH--hemoprotein reductase] + H2O + H(+). It carries out the reaction tetradecanoate + reduced [NADPH--hemoprotein reductase] + O2 = 9-hydroxytetradecanoate + oxidized [NADPH--hemoprotein reductase] + H2O + H(+). It catalyses the reaction tetradecanoate + reduced [NADPH--hemoprotein reductase] + O2 = 10-hydroxytetradecanoate + oxidized [NADPH--hemoprotein reductase] + H2O + H(+). The catalysed reaction is tetradecanoate + reduced [NADPH--hemoprotein reductase] + O2 = 11-hydroxytetradecanoate + oxidized [NADPH--hemoprotein reductase] + H2O + H(+). The enzyme catalyses tetradecanoate + reduced [NADPH--hemoprotein reductase] + O2 = 12-hydroxytetradecanoate + oxidized [NADPH--hemoprotein reductase] + H2O + H(+). It carries out the reaction (5Z,8Z,11Z,14Z)-eicosatetraenoate + reduced [NADPH--hemoprotein reductase] + O2 = (14S,15R)-epoxy-(5Z,8Z,11Z)-eicosatrienoate + oxidized [NADPH--hemoprotein reductase] + H2O + H(+). Functionally, a cytochrome P450 monooxygenase that catalyzes the in-chain oxidation of fatty acids. Catalyzes the hydroxylation of carbon-hydrogen bonds. Hydroxylates lauric and myristic acids predominantly at the omega-4 and omega-2 positions, respectively. Catalyzes the epoxidation of double bonds of polyunsaturated fatty acids (PUFA). Displays an absolute stereoselectivity in the epoxidation of arachidonic acid producing the 14(S),15(R)-epoxyeicosatrienoic acid (EET) enantiomer. Mechanistically, uses molecular oxygen inserting one oxygen atom into a substrate, and reducing the second into a water molecule, with two electrons provided by NADPH via cytochrome P450 reductase (CPR; NADPH-ferrihemoprotein reductase). This Homo sapiens (Human) protein is Cytochrome P450 4Z1.